A 535-amino-acid chain; its full sequence is Light-independent protochlorophyllide reductase subunit B (535 aa).

Position 36 (Asp-36) interacts with [4Fe-4S] cluster. Asp-292 (proton donor) is an active-site residue. Position 428-429 (428-429) interacts with substrate; the sequence is GL.

It belongs to the ChlB/BchB/BchZ family. In terms of assembly, protochlorophyllide reductase is composed of three subunits; BchL, BchN and BchB. Forms a heterotetramer of two BchB and two BchN subunits. Requires [4Fe-4S] cluster as cofactor.

It carries out the reaction chlorophyllide a + oxidized 2[4Fe-4S]-[ferredoxin] + 2 ADP + 2 phosphate = protochlorophyllide a + reduced 2[4Fe-4S]-[ferredoxin] + 2 ATP + 2 H2O. It functions in the pathway porphyrin-containing compound metabolism; bacteriochlorophyll biosynthesis (light-independent). Functionally, component of the dark-operative protochlorophyllide reductase (DPOR) that uses Mg-ATP and reduced ferredoxin to reduce ring D of protochlorophyllide (Pchlide) to form chlorophyllide a (Chlide). This reaction is light-independent. The NB-protein (BchN-BchB) is the catalytic component of the complex. This Pelodictyon phaeoclathratiforme (strain DSM 5477 / BU-1) protein is Light-independent protochlorophyllide reductase subunit B.